Consider the following 390-residue polypeptide: 3-ketoacyl-CoA thiolase (390 aa).

Cys95 (acyl-thioester intermediate) is an active-site residue. Active-site proton acceptor residues include His346 and Cys376.

The protein belongs to the thiolase-like superfamily. Thiolase family. In terms of assembly, heterotetramer of two alpha chains (FadB) and two beta chains (FadA).

It is found in the cytoplasm. The enzyme catalyses an acyl-CoA + acetyl-CoA = a 3-oxoacyl-CoA + CoA. It functions in the pathway lipid metabolism; fatty acid beta-oxidation. Catalyzes the final step of fatty acid oxidation in which acetyl-CoA is released and the CoA ester of a fatty acid two carbons shorter is formed. This Psychrobacter arcticus (strain DSM 17307 / VKM B-2377 / 273-4) protein is 3-ketoacyl-CoA thiolase.